Reading from the N-terminus, the 613-residue chain is Zinc finger protein 665 (613 aa).

18 consecutive C2H2-type zinc fingers follow at residues 113–135, 141–163, 169–191, 197–219, 225–247, 253–275, 281–303, 309–331, 337–359, 365–387, 393–415, 421–443, 449–471, 477–499, 505–527, 533–555, 561–583, and 589–611; these read YKCD…KRIH, YRCN…QVIH, YKCN…QRIH, YKCN…QVIH, YKCN…RRIH, YKCN…QTIH, YKCN…RRVH, YKCN…QIIH, FKCN…RRIH, YRCD…QAIH, YKCN…RGIH, YKCD…WRVH, and YRCN…MAIH.

This sequence belongs to the krueppel C2H2-type zinc-finger protein family.

The protein resides in the nucleus. In terms of biological role, may be involved in transcriptional regulation. The protein is Zinc finger protein 665 (ZNF665) of Pongo abelii (Sumatran orangutan).